Reading from the N-terminus, the 415-residue chain is Phosphoglycerate kinase (415 aa).

13 residues coordinate (2R)-3-phosphoglycerate: valine 22, aspartate 23, phenylalanine 24, asparagine 25, glutamine 37, arginine 38, serine 61, histidine 62, glycine 64, leucine 120, arginine 121, histidine 168, and arginine 169. Glycine 212 is an ADP binding site. Residue glycine 212 participates in CDP binding. Residues alanine 213 and lysine 214 each contribute to the AMP site. Alanine 213 serves as a coordination point for ATP. Mg(2+) is bound at residue alanine 213. Position 217 (aspartate 217) interacts with CDP. Aspartate 217 is a Mg(2+) binding site. Lysine 218 is a binding site for AMP. Lysine 218 is a binding site for ATP. Glycine 236 is an ADP binding site. Glycine 236 lines the CDP pocket. Glycine 237 and glycine 311 together coordinate AMP. Residues glycine 237 and glycine 311 each coordinate ATP. 2 residues coordinate CDP: glycine 336 and phenylalanine 341. Phenylalanine 341 is an ADP binding site. Glutamate 342 contributes to the AMP binding site. ATP-binding residues include glutamate 342, aspartate 373, and threonine 374. Aspartate 373 contacts Mg(2+).

It belongs to the phosphoglycerate kinase family. Monomer. It depends on Mg(2+) as a cofactor.

The protein resides in the cytoplasm. The enzyme catalyses (2R)-3-phosphoglycerate + ATP = (2R)-3-phospho-glyceroyl phosphate + ADP. It functions in the pathway carbohydrate degradation; glycolysis; pyruvate from D-glyceraldehyde 3-phosphate: step 2/5. This Opisthorchis sinensis (Clonorchis sinensis) protein is Phosphoglycerate kinase (PGK).